Reading from the N-terminus, the 474-residue chain is Glutamate--tRNA ligase (474 aa).

The short motif at 9–19 (PSPTGYLHVGG) is the 'HIGH' region element. The 'KMSKS' region signature appears at 240-244 (KLSKR). Position 243 (lysine 243) interacts with ATP.

It belongs to the class-I aminoacyl-tRNA synthetase family. Glutamate--tRNA ligase type 1 subfamily. In terms of assembly, monomer.

It localises to the cytoplasm. The enzyme catalyses tRNA(Glu) + L-glutamate + ATP = L-glutamyl-tRNA(Glu) + AMP + diphosphate. Its function is as follows. Catalyzes the attachment of glutamate to tRNA(Glu) in a two-step reaction: glutamate is first activated by ATP to form Glu-AMP and then transferred to the acceptor end of tRNA(Glu). The sequence is that of Glutamate--tRNA ligase from Aliivibrio salmonicida (strain LFI1238) (Vibrio salmonicida (strain LFI1238)).